The primary structure comprises 125 residues: Ribosome-binding factor A (125 aa).

It belongs to the RbfA family. Monomer. Binds 30S ribosomal subunits, but not 50S ribosomal subunits or 70S ribosomes.

The protein localises to the cytoplasm. One of several proteins that assist in the late maturation steps of the functional core of the 30S ribosomal subunit. Associates with free 30S ribosomal subunits (but not with 30S subunits that are part of 70S ribosomes or polysomes). Required for efficient processing of 16S rRNA. May interact with the 5'-terminal helix region of 16S rRNA. The protein is Ribosome-binding factor A of Desulfitobacterium hafniense (strain DSM 10664 / DCB-2).